The chain runs to 336 residues: Glycerol-3-phosphate dehydrogenase [NAD(P)+] (336 aa).

NADPH-binding residues include Trp11, Arg33, and Lys105. The sn-glycerol 3-phosphate site is built by Lys105, Gly141, and Ser143. NADPH is bound at residue Ala145. Sn-glycerol 3-phosphate-binding residues include Lys196, Asp249, Ser259, Arg260, and Asn261. Residue Lys196 is the Proton acceptor of the active site. Arg260 lines the NADPH pocket. NADPH-binding residues include Val284 and Glu286.

It belongs to the NAD-dependent glycerol-3-phosphate dehydrogenase family.

It is found in the cytoplasm. The catalysed reaction is sn-glycerol 3-phosphate + NAD(+) = dihydroxyacetone phosphate + NADH + H(+). It catalyses the reaction sn-glycerol 3-phosphate + NADP(+) = dihydroxyacetone phosphate + NADPH + H(+). It participates in membrane lipid metabolism; glycerophospholipid metabolism. Functionally, catalyzes the reduction of the glycolytic intermediate dihydroxyacetone phosphate (DHAP) to sn-glycerol 3-phosphate (G3P), the key precursor for phospholipid synthesis. In Delftia acidovorans (strain DSM 14801 / SPH-1), this protein is Glycerol-3-phosphate dehydrogenase [NAD(P)+].